A 144-amino-acid polypeptide reads, in one-letter code: Transcription antitermination protein NusB (144 aa).

It belongs to the NusB family.

Functionally, involved in transcription antitermination. Required for transcription of ribosomal RNA (rRNA) genes. Binds specifically to the boxA antiterminator sequence of the ribosomal RNA (rrn) operons. This is Transcription antitermination protein NusB from Paraburkholderia phytofirmans (strain DSM 17436 / LMG 22146 / PsJN) (Burkholderia phytofirmans).